A 307-amino-acid polypeptide reads, in one-letter code: Metapyrocatechase (307 aa).

2 VOC domains span residues 7-122 (RPGH…LYAD) and 150-269 (RFDH…VFCG). Residues H153, H214, and E265 each contribute to the Fe cation site.

The protein belongs to the extradiol ring-cleavage dioxygenase family. In terms of assembly, homotetramer. The cofactor is Fe(2+).

It catalyses the reaction catechol + O2 = (2Z,4E)-2-hydroxy-6-oxohexa-2,4-dienoate + H(+). It functions in the pathway xenobiotic degradation; toluene degradation. The protein is Metapyrocatechase (bztE) of Pseudomonas aeruginosa.